The sequence spans 208 residues: Interleukin-6 (208 aa).

Residues 1–20 form the signal peptide; that stretch reads MNSLSTIAFSLGLLLVTATA. Residues Cys-67 and Cys-73 are joined by a disulfide bond. Phosphoserine is present on Ser-76. A disulfide bond links Cys-96 and Cys-106. The N-linked (GlcNAc...) asparagine glycan is linked to Asn-167.

The protein belongs to the IL-6 superfamily. As to quaternary structure, component of a hexamer of two molecules each of IL6, IL6R and IL6ST; first binds to IL6R to associate with the signaling subunit IL6ST. Interacts with IL6R (via the N-terminal ectodomain); this interaction may be affected by IL6R-binding with SORL1, hence decreasing IL6 cis signaling. Interacts with SORL1 (via the N-terminal ectodomain); this interaction leads to IL6 internalization and lysosomal degradation. May form a trimeric complex with the soluble SORL1 ectodomain and soluble IL6R receptor; this interaction might stabilize circulating IL6, hence promoting IL6 trans signaling.

Its subcellular location is the secreted. Functionally, cytokine with a wide variety of biological functions in immunity, tissue regeneration, and metabolism. Binds to IL6R, then the complex associates to the signaling subunit IL6ST/gp130 to trigger the intracellular IL6-signaling pathway. The interaction with the membrane-bound IL6R and IL6ST stimulates 'classic signaling', whereas the binding of IL6 and soluble IL6R to IL6ST stimulates 'trans-signaling'. Alternatively, 'cluster signaling' occurs when membrane-bound IL6:IL6R complexes on transmitter cells activate IL6ST receptors on neighboring receiver cells. IL6 is a potent inducer of the acute phase response. Rapid production of IL6 contributes to host defense during infection and tissue injury, but excessive IL6 synthesis is involved in disease pathology. In the innate immune response, is synthesized by myeloid cells, such as macrophages and dendritic cells, upon recognition of pathogens through toll-like receptors (TLRs) at the site of infection or tissue injury. In the adaptive immune response, is required for the differentiation of B cells into immunoglobulin-secreting cells. Plays a major role in the differentiation of CD4(+) T cell subsets. Essential factor for the development of T follicular helper (Tfh) cells that are required for the induction of germinal-center formation. Required to drive naive CD4(+) T cells to the Th17 lineage. Also required for proliferation of myeloma cells and the survival of plasmablast cells. In terms of biological role, acts as an essential factor in bone homeostasis and on vessels directly or indirectly by induction of VEGF, resulting in increased angiogenesis activity and vascular permeability. Induces, through 'trans-signaling' and synergistically with IL1B and TNF, the production of VEGF. Involved in metabolic controls, is discharged into the bloodstream after muscle contraction increasing lipolysis and improving insulin resistance. 'Trans-signaling' in central nervous system also regulates energy and glucose homeostasis. Mediates, through GLP-1, crosstalk between insulin-sensitive tissues, intestinal L cells and pancreatic islets to adapt to changes in insulin demand. Also acts as a myokine. Plays a protective role during liver injury, being required for maintenance of tissue regeneration. Also has a pivotal role in iron metabolism by regulating HAMP/hepcidin expression upon inflammation or bacterial infection. Through activation of IL6ST-YAP-NOTCH pathway, induces inflammation-induced epithelial regeneration. This chain is Interleukin-6 (IL6), found in Delphinapterus leucas (Beluga whale).